Reading from the N-terminus, the 474-residue chain is tRNA modification GTPase MnmE (474 aa).

Positions 25, 82, and 123 each coordinate (6S)-5-formyl-5,6,7,8-tetrahydrofolate. One can recognise a TrmE-type G domain in the interval 219–386; it reads GIKVVIAGKP…LKKHLYDSAM (168 aa). Residue N229 participates in K(+) binding. GTP-binding positions include 229-234, 248-254, and 273-276; these read NAGKSS, SNISGTT, and DTAG. Residue S233 coordinates Mg(2+). Residues S248, I250, and T253 each coordinate K(+). Mg(2+) is bound at residue T254. Residue K474 coordinates (6S)-5-formyl-5,6,7,8-tetrahydrofolate.

It belongs to the TRAFAC class TrmE-Era-EngA-EngB-Septin-like GTPase superfamily. TrmE GTPase family. Homodimer. Heterotetramer of two MnmE and two MnmG subunits. K(+) is required as a cofactor.

It localises to the cytoplasm. Exhibits a very high intrinsic GTPase hydrolysis rate. Involved in the addition of a carboxymethylaminomethyl (cmnm) group at the wobble position (U34) of certain tRNAs, forming tRNA-cmnm(5)s(2)U34. The sequence is that of tRNA modification GTPase MnmE from Blochmanniella floridana.